The following is a 245-amino-acid chain: tRNA (guanine-N(1)-)-methyltransferase (245 aa).

Residues Gly111 and 131-136 (IGDYVL) contribute to the S-adenosyl-L-methionine site.

It belongs to the RNA methyltransferase TrmD family. In terms of assembly, homodimer.

The protein resides in the cytoplasm. The catalysed reaction is guanosine(37) in tRNA + S-adenosyl-L-methionine = N(1)-methylguanosine(37) in tRNA + S-adenosyl-L-homocysteine + H(+). Specifically methylates guanosine-37 in various tRNAs. This Staphylococcus carnosus (strain TM300) protein is tRNA (guanine-N(1)-)-methyltransferase.